A 141-amino-acid chain; its full sequence is Putative lipoprotein Tanf_09445 (141 aa).

Positions 1-20 (MKQKIILWIGALLLLTAGTG) are cleaved as a signal peptide. Cysteine 21 is lipidated: N-palmitoyl cysteine. The S-diacylglycerol cysteine moiety is linked to residue cysteine 21.

It localises to the cell membrane. The protein is Putative lipoprotein Tanf_09445 of Tannerella forsythia (strain ATCC 43037 / JCM 10827 / CCUG 21028 A / KCTC 5666 / FDC 338) (Bacteroides forsythus).